Reading from the N-terminus, the 135-residue chain is ATP synthase epsilon chain (135 aa).

The protein belongs to the ATPase epsilon chain family. As to quaternary structure, F-type ATPases have 2 components, CF(1) - the catalytic core - and CF(0) - the membrane proton channel. CF(1) has five subunits: alpha(3), beta(3), gamma(1), delta(1), epsilon(1). CF(0) has three main subunits: a, b and c.

It is found in the cell inner membrane. In terms of biological role, produces ATP from ADP in the presence of a proton gradient across the membrane. The sequence is that of ATP synthase epsilon chain from Rhizobium etli (strain CIAT 652).